Consider the following 186-residue polypeptide: Mediator of RNA polymerase II transcription subunit 10a (186 aa).

The protein belongs to the Mediator complex subunit 10 family. In terms of assembly, mono-, di- and oligomers. Component of the Mediator complex. Interacts with GEBPL.

It is found in the nucleus. Its function is as follows. Component of the Mediator complex, a coactivator involved in the regulated transcription of nearly all RNA polymerase II-dependent genes. Mediator functions as a bridge to convey information from gene-specific regulatory proteins to the basal RNA polymerase II transcription machinery. The Mediator complex, having a compact conformation in its free form, is recruited to promoters by direct interactions with regulatory proteins and serves for the assembly of a functional pre-initiation complex with RNA polymerase II and the general transcription factors. This Arabidopsis thaliana (Mouse-ear cress) protein is Mediator of RNA polymerase II transcription subunit 10a.